Here is a 699-residue protein sequence, read N- to C-terminus: MAAPVARGECSEAALAAALADVPELARLLELDPYLKPFALDFQRRYKKFNETLNNIGENEGGIDKFSRGYESFGVHRCADGGLYCKEWAPGAEGVFLTGDFNDWNPFSYPYKKLDYGKWELYIPPKQNKSQLVPHGSKLKVVIRSKSGEILYRISPWAKYVTREGENVNYDWTHWDPEHPYKFKHSRPKKPRGVRIYESHVGISSYEGKIASYKHFTYNVLPRIKDLGYNCIQMMAIMEHAYYASFGYQITSFFAASSRYGTPEELKELVDTAHSMGITVLLDVVHSHASKNSEDGLNMFDGTDSCYFHSGPRGNHDLWDSRLFIYSSWEVLRFLLSNIRWWLEEYGFDGFRFDGVTSMLYHHHGMGQAFSGDYHEYFGLQVDEDALIYLMLANHLVHTLYPNSITIAEDVSGMPALCSPISQGGVGFDYRLAMAIPDKWIQLLKEFKDEDWNMGNIVYTLTNRRYLEKCIAYAESHDQALVGDKTLAFWLMDAEMYTNMSVLTPFTPVIDRGIQLHKMIRLITHALGGEGYLNFMGNEFGHPEWLDFPRKGNNESYHYARRQFHLTDDDLLRYKFLNNFDRDMNKLEERCGWLSAPQAFVSEKHEGNKIIAFERAGLVFIFNFHPSKSYTDYRVGTTLPGKFRIVLDTDAAEYGGHQRLDHSTEFFSQPFKHNERPCSLLVYIPNRVGLILQNVDMPN.

Substrate is bound by residues 59 to 60 and 88 to 90; these read NE and WAP. Residue Trp-104 coordinates (1,4-alpha-D-glucosyl)n. 115 to 118 is a substrate binding site; the sequence is DYGK. A (1,4-alpha-D-glucosyl)n-binding site is contributed by Lys-140. Tyr-170 is modified (phosphotyrosine). A substrate-binding site is contributed by 330–333; the sequence is EVLR. The active-site Nucleophile is Asp-354. Glu-409 functions as the Proton donor in the catalytic mechanism.

This sequence belongs to the glycosyl hydrolase 13 family. GlgB subfamily. In terms of assembly, monomer.

It carries out the reaction Transfers a segment of a (1-&gt;4)-alpha-D-glucan chain to a primary hydroxy group in a similar glucan chain.. Its pathway is glycan biosynthesis; glycogen biosynthesis. In terms of biological role, glycogen-branching enzyme participates in the glycogen biosynthetic process along with glycogenin and glycogen synthase. Generates alpha-1,6-glucosidic branches from alpha-1,4-linked glucose chains, to increase solubility of the glycogen polymer. The chain is 1,4-alpha-glucan-branching enzyme (GBE1) from Felis catus (Cat).